Consider the following 68-residue polypeptide: DNA gyrase inhibitor YacG (68 aa).

Zn(2+) contacts are provided by Cys14, Cys17, Cys29, and Cys33.

This sequence belongs to the DNA gyrase inhibitor YacG family. In terms of assembly, interacts with GyrB. Zn(2+) serves as cofactor.

Inhibits all the catalytic activities of DNA gyrase by preventing its interaction with DNA. Acts by binding directly to the C-terminal domain of GyrB, which probably disrupts DNA binding by the gyrase. The protein is DNA gyrase inhibitor YacG of Azorhizobium caulinodans (strain ATCC 43989 / DSM 5975 / JCM 20966 / LMG 6465 / NBRC 14845 / NCIMB 13405 / ORS 571).